Here is a 175-residue protein sequence, read N- to C-terminus: Large ribosomal subunit protein bL17 (175 aa).

The tract at residues 127-175 (GEAEAATKRAVKEDALKKDEAPAAESVEDAKPAEDAPAAEAADDKGKDA) is disordered. The segment covering 131-147 (AATKRAVKEDALKKDEA) has biased composition (basic and acidic residues).

The protein belongs to the bacterial ribosomal protein bL17 family. As to quaternary structure, part of the 50S ribosomal subunit. Contacts protein L32.

The chain is Large ribosomal subunit protein bL17 from Streptomyces griseus subsp. griseus (strain JCM 4626 / CBS 651.72 / NBRC 13350 / KCC S-0626 / ISP 5235).